The sequence spans 266 residues: Undecaprenyl-diphosphatase (266 aa).

A run of 8 helical transmembrane segments spans residues 1 to 21, 39 to 59, 83 to 103, 111 to 131, 144 to 164, 183 to 203, 218 to 238, and 246 to 266; these read MDTFQVIILALIQGLTEFLPI, QGLAFDVAVHIGSLLAVVLYF, SKLAWWIILATLPAVILGFAL, LRGPGVIAITTVLFGLLLWWA, TGWKKALLIGFAQALALIPGT, AAARFSFLMSIPVILGAAILM, SLALGVGVSFVAAYTCIHLFL, and MTPFVIYRLALGALLCAFIFM.

The protein belongs to the UppP family.

The protein localises to the cell inner membrane. The catalysed reaction is di-trans,octa-cis-undecaprenyl diphosphate + H2O = di-trans,octa-cis-undecaprenyl phosphate + phosphate + H(+). Its function is as follows. Catalyzes the dephosphorylation of undecaprenyl diphosphate (UPP). Confers resistance to bacitracin. The protein is Undecaprenyl-diphosphatase of Shewanella woodyi (strain ATCC 51908 / MS32).